We begin with the raw amino-acid sequence, 570 residues long: Putative ABC transporter ATP-binding protein SAV2684 (570 aa).

ABC transporter domains follow at residues 6-247 (ISFK…GIRE) and 304-537 (LELN…ASLR). ATP contacts are provided by residues 40–47 (GASGSGKS) and 338–345 (GHNGAGKS).

This sequence belongs to the ABC transporter superfamily.

The protein resides in the cell membrane. Probably part of an ABC transporter complex. Responsible for energy coupling to the transport system. The chain is Putative ABC transporter ATP-binding protein SAV2684 from Staphylococcus aureus (strain Mu50 / ATCC 700699).